Reading from the N-terminus, the 142-residue chain is Large ribosomal subunit protein uL13 (142 aa).

This sequence belongs to the universal ribosomal protein uL13 family. Part of the 50S ribosomal subunit.

Functionally, this protein is one of the early assembly proteins of the 50S ribosomal subunit, although it is not seen to bind rRNA by itself. It is important during the early stages of 50S assembly. The protein is Large ribosomal subunit protein uL13 of Pseudomonas syringae pv. tomato (strain ATCC BAA-871 / DC3000).